The following is a 121-amino-acid chain: Phosphoribosyl-ATP pyrophosphatase (121 aa).

This sequence belongs to the PRA-PH family.

It is found in the cytoplasm. The enzyme catalyses 1-(5-phospho-beta-D-ribosyl)-ATP + H2O = 1-(5-phospho-beta-D-ribosyl)-5'-AMP + diphosphate + H(+). The protein operates within amino-acid biosynthesis; L-histidine biosynthesis; L-histidine from 5-phospho-alpha-D-ribose 1-diphosphate: step 2/9. The polypeptide is Phosphoribosyl-ATP pyrophosphatase (Burkholderia cenocepacia (strain HI2424)).